The following is a 283-amino-acid chain: Coiled-coil domain-containing protein 42 homolog (283 aa).

Coiled coils occupy residues 31-139 (ATQL…LQRY) and 174-204 (QDLR…HRVS).

It belongs to the CFAP73 family.

The chain is Coiled-coil domain-containing protein 42 homolog from Monosiga brevicollis (Choanoflagellate).